The primary structure comprises 871 residues: Leucine--tRNA ligase (871 aa).

The short motif at Pro42–His52 is the 'HIGH' region element. The 'KMSKS' region motif lies at Thr634–Ser638. Residue Lys637 coordinates ATP.

The protein belongs to the class-I aminoacyl-tRNA synthetase family.

It is found in the cytoplasm. The enzyme catalyses tRNA(Leu) + L-leucine + ATP = L-leucyl-tRNA(Leu) + AMP + diphosphate. The chain is Leucine--tRNA ligase from Nostoc punctiforme (strain ATCC 29133 / PCC 73102).